The following is a 305-amino-acid chain: Ribosomal RNA large subunit methyltransferase F (305 aa).

Belongs to the methyltransferase superfamily. METTL16/RlmF family.

Its subcellular location is the cytoplasm. The catalysed reaction is adenosine(1618) in 23S rRNA + S-adenosyl-L-methionine = N(6)-methyladenosine(1618) in 23S rRNA + S-adenosyl-L-homocysteine + H(+). Specifically methylates the adenine in position 1618 of 23S rRNA. In Bacteroides fragilis (strain YCH46), this protein is Ribosomal RNA large subunit methyltransferase F.